The following is a 119-amino-acid chain: Acidic phospholipase A2 DE-III (119 aa).

Disulfide bonds link Cys-11–Cys-72, Cys-26–Cys-118, Cys-28–Cys-44, Cys-43–Cys-99, Cys-50–Cys-92, Cys-60–Cys-85, and Cys-79–Cys-90. Ca(2+)-binding residues include Tyr-27, Gly-29, and Gly-31. The active site involves His-47. Asp-48 is a binding site for Ca(2+). Asp-93 is a catalytic residue.

Belongs to the phospholipase A2 family. Group I subfamily. D49 sub-subfamily. Ca(2+) is required as a cofactor. Expressed by the venom gland.

The protein resides in the secreted. It carries out the reaction a 1,2-diacyl-sn-glycero-3-phosphocholine + H2O = a 1-acyl-sn-glycero-3-phosphocholine + a fatty acid + H(+). Functionally, PLA2 catalyzes the calcium-dependent hydrolysis of the 2-acyl groups in 3-sn-phosphoglycerides. The polypeptide is Acidic phospholipase A2 DE-III (Naja melanoleuca (Forest cobra)).